Consider the following 335-residue polypeptide: Nucleoid-associated protein PP_0973 (335 aa).

The protein belongs to the YejK family.

The protein localises to the cytoplasm. It is found in the nucleoid. In Pseudomonas putida (strain ATCC 47054 / DSM 6125 / CFBP 8728 / NCIMB 11950 / KT2440), this protein is Nucleoid-associated protein PP_0973.